The chain runs to 478 residues: tRNA(Ile)-lysidine synthase (478 aa).

27 to 32 (SGGSDS) serves as a coordination point for ATP.

Belongs to the tRNA(Ile)-lysidine synthase family.

It localises to the cytoplasm. It catalyses the reaction cytidine(34) in tRNA(Ile2) + L-lysine + ATP = lysidine(34) in tRNA(Ile2) + AMP + diphosphate + H(+). In terms of biological role, ligates lysine onto the cytidine present at position 34 of the AUA codon-specific tRNA(Ile) that contains the anticodon CAU, in an ATP-dependent manner. Cytidine is converted to lysidine, thus changing the amino acid specificity of the tRNA from methionine to isoleucine. The sequence is that of tRNA(Ile)-lysidine synthase from Rickettsia conorii (strain ATCC VR-613 / Malish 7).